The chain runs to 304 residues: Aspartate carbamoyltransferase catalytic subunit (304 aa).

Residues R49 and T50 each coordinate carbamoyl phosphate. L-aspartate is bound at residue K77. Residues R99, H127, and Q130 each contribute to the carbamoyl phosphate site. The L-aspartate site is built by R160 and R211. Carbamoyl phosphate is bound by residues A252 and P253.

This sequence belongs to the aspartate/ornithine carbamoyltransferase superfamily. ATCase family. As to quaternary structure, heterododecamer (2C3:3R2) of six catalytic PyrB chains organized as two trimers (C3), and six regulatory PyrI chains organized as three dimers (R2).

The enzyme catalyses carbamoyl phosphate + L-aspartate = N-carbamoyl-L-aspartate + phosphate + H(+). The protein operates within pyrimidine metabolism; UMP biosynthesis via de novo pathway; (S)-dihydroorotate from bicarbonate: step 2/3. In terms of biological role, catalyzes the condensation of carbamoyl phosphate and aspartate to form carbamoyl aspartate and inorganic phosphate, the committed step in the de novo pyrimidine nucleotide biosynthesis pathway. This is Aspartate carbamoyltransferase catalytic subunit from Bacillus cereus (strain ATCC 10987 / NRS 248).